The sequence spans 480 residues: MVSKPFQRPFSLATRLTFFISLATIAAFFAFAWIMIHSVKVHFAEQDINDLKEISATLERVLNHPDETQARRLMTLEDIVSGYSNVLISLADSHGKTVYHSPGAPDIREFTRDAIPDKDAQGGEVYLLSGPTMMMPGHGHGHMEHSNWRMINLPVGPLVDGKPIYTLYIALSIDFHLHYINDLMNKLIMTASVISILIVFIVLLAVHKGHAPIRSVSRQIQNITSKDLDVRLDPQTVPIELEQLVLSFNHMIERIEDVFTRQSNFSADIAHEIRTPITNLITQTEIALSQSRSQKELEDVLYSNLEELTRMAKMVSDMLFLAQADNNQLIPEKKMLNLADEVGKVFDFFEALAEDRGVELRFVGDECQVAGDPLMLRRALSNLLSNALRYTPTGETIVVRCQTVDHLVQVTVENPGTPIAPEHLPRLFDRFYRVDPSRQRKGEGSGIGLAIVKSIVVAHKGTVAVTSDVRGTRFVIILPA.

The Cytoplasmic segment spans residues 1–15; the sequence is MVSKPFQRPFSLATR. A helical membrane pass occupies residues 16-36; it reads LTFFISLATIAAFFAFAWIMI. Topologically, residues 37-186 are periplasmic; sequence HSVKVHFAEQ…LHYINDLMNK (150 aa). Residues 187-207 traverse the membrane as a helical segment; it reads LIMTASVISILIVFIVLLAVH. Residues 207–260 form the HAMP domain; that stretch reads HKGHAPIRSVSRQIQNITSKDLDVRLDPQTVPIELEQLVLSFNHMIERIEDVFT. The Cytoplasmic portion of the chain corresponds to 208–480; sequence KGHAPIRSVS…GTRFVIILPA (273 aa). Residues 268 to 480 form the Histidine kinase domain; the sequence is DIAHEIRTPI…GTRFVIILPA (213 aa). At His-271 the chain carries Phosphohistidine; by autocatalysis.

Post-translationally, autophosphorylated.

It is found in the cell inner membrane. The enzyme catalyses ATP + protein L-histidine = ADP + protein N-phospho-L-histidine.. In terms of biological role, member of the two-component regulatory system CusS/CusR involved in response to copper and silver. Acts as a copper/silver ion sensor. Activates CusR by phosphorylation. The protein is Sensor histidine kinase CusS (cusS) of Escherichia coli O6:H1 (strain CFT073 / ATCC 700928 / UPEC).